Reading from the N-terminus, the 1331-residue chain is Retrotransposon-like protein 1 (1331 aa).

4 disordered regions span residues 1–123, 128–147, 556–595, and 971–1033; these read MMEP…SQED, TDLA…SSTV, EADE…ETFY, and PSSE…DEPN. Low complexity predominate over residues 19–30; sequence SSKQMESSEGSS. Acidic residues-rich tracts occupy residues 109–123, 128–143, and 569–578; these read EMEE…SQED, TDLA…EEPD, and GSDDLSESEP. Residues 992–1001 are compositionally biased toward low complexity; that stretch reads RRVATTTRPT. The segment covering 1015-1024 has biased composition (acidic residues); it reads PESEDEEESE. 2 helical membrane-spanning segments follow: residues 1070–1090 and 1117–1137; these read FYRS…LVML and LFLD…TQLF. Residues 1309-1331 are disordered; sequence SPPREGATLEELPSDADEDAGLD. The segment covering 1320-1331 has biased composition (acidic residues); the sequence is LPSDADEDAGLD.

The protein localises to the membrane. In terms of biological role, plays an essential role in capillaries endothelial cells for the maintenance of feto-maternal interface and for development of the placenta. This Bos taurus (Bovine) protein is Retrotransposon-like protein 1 (RTL1).